Here is a 288-residue protein sequence, read N- to C-terminus: MQRRWVFVLLDVLCLLVASLPFAILTLVNAPYKRGFYCGDDSIRYPYRPDTITHGLMAGVTITATVILVSAGEAYLVYTDRLYSRSDFNNYVAAVYKVLGTFLFGAAVSQSLTDLAKYMIGRLRPNFLAVCDPDWSRVNCSVYVQLEKVCRGNPADVTEARLSFYSGHSSFGMYCMVFLALYVQARLCWKWARLLRPTVQFFLVAFALYVGYTRVSDYKHHWSDVLVGLLQGALVAALTVCYISDFFKARPPQHCLKEEELERKPSLSLTLTLGEADHNHYGYPHSSS.

Residues 1–4 are Cytoplasmic-facing; sequence MQRR. The chain crosses the membrane as a helical span at residues 5–25; the sequence is WVFVLLDVLCLLVASLPFAIL. Topologically, residues 26–51 are lumenal; the sequence is TLVNAPYKRGFYCGDDSIRYPYRPDT. The chain crosses the membrane as a helical span at residues 52-72; the sequence is ITHGLMAGVTITATVILVSAG. Residues 73–87 are Cytoplasmic-facing; the sequence is EAYLVYTDRLYSRSD. The helical transmembrane segment at 88-108 threads the bilayer; it reads FNNYVAAVYKVLGTFLFGAAV. Topologically, residues 109–162 are lumenal; that stretch reads SQSLTDLAKYMIGRLRPNFLAVCDPDWSRVNCSVYVQLEKVCRGNPADVTEARL. The tract at residues 117–125 is phosphatase sequence motif I; sequence KYMIGRLRP. A glycan (N-linked (GlcNAc...) asparagine) is linked at asparagine 139. Residues 163-183 traverse the membrane as a helical segment; the sequence is SFYSGHSSFGMYCMVFLALYV. A phosphatase sequence motif II region spans residues 165–168; that stretch reads YSGH. Histidine 168 acts as the Proton donors in catalysis. Over 184–196 the chain is Cytoplasmic; it reads QARLCWKWARLLR. A helical membrane pass occupies residues 197 to 217; it reads PTVQFFLVAFALYVGYTRVSD. The phosphatase sequence motif III stretch occupies residues 213–224; that stretch reads TRVSDYKHHWSD. Residues 218-226 are Lumenal-facing; it reads YKHHWSDVL. Residue histidine 220 is the Nucleophile of the active site. Residues 227–247 form a helical membrane-spanning segment; that stretch reads VGLLQGALVAALTVCYISDFF. At 248 to 288 the chain is on the cytoplasmic side; that stretch reads KARPPQHCLKEEELERKPSLSLTLTLGEADHNHYGYPHSSS.

The protein belongs to the PA-phosphatase related phosphoesterase family. In terms of assembly, forms functional homodimers and homooligomers. Can also form heterooligomers with PLPP1 and PLPP3. In terms of processing, N-glycosylated. In terms of tissue distribution, found mainly in brain, pancreas and placenta.

The protein resides in the membrane. The protein localises to the cell membrane. Its subcellular location is the early endosome membrane. It localises to the endoplasmic reticulum membrane. It carries out the reaction a 1,2-diacyl-sn-glycero-3-phosphate + H2O = a 1,2-diacyl-sn-glycerol + phosphate. It catalyses the reaction 1,2-dihexadecanoyl-sn-glycero-3-phosphate + H2O = 1,2-dihexadecanoyl-sn-glycerol + phosphate. The enzyme catalyses 1,2-di-(9Z-octadecenoyl)-sn-glycero-3-phosphate + H2O = 1,2-di-(9Z-octadecenoyl)-sn-glycerol + phosphate. The catalysed reaction is a monoacyl-sn-glycero-3-phosphate + H2O = a monoacylglycerol + phosphate. It carries out the reaction (9Z)-octadecenoyl-sn-glycero-3-phosphate + H2O = (9Z-octadecenoyl)-glycerol + phosphate. It catalyses the reaction sphing-4-enine 1-phosphate + H2O = sphing-4-enine + phosphate. The enzyme catalyses an N-acylsphing-4-enine 1-phosphate + H2O = an N-acylsphing-4-enine + phosphate. The catalysed reaction is N-(octanoyl)-sphing-4-enine-1-phosphate + H2O = N-octanoylsphing-4-enine + phosphate. It carries out the reaction N-(9Z-octadecenoyl)-ethanolamine phosphate + H2O = N-(9Z-octadecenoyl) ethanolamine + phosphate. It functions in the pathway lipid metabolism; phospholipid metabolism. With respect to regulation, magnesium-independent phospholipid phosphatase. Insensitive to N-ethylmaleimide. Inhibited by sphingosine, zinc ions and modestly by propanolol. In terms of biological role, magnesium-independent phospholipid phosphatase that catalyzes the dephosphorylation of a variety of glycerolipid and sphingolipid phosphate esters including phosphatidate/PA, lysophosphatidate/LPA, sphingosine 1-phosphate/S1P and ceramide 1-phosphate/C1P. Has no apparent extracellular phosphatase activity and therefore most probably acts intracellularly. Also acts on N-oleoyl ethanolamine phosphate/N-(9Z-octadecenoyl)-ethanolamine phosphate, a potential physiological compound. Through dephosphorylation of these bioactive lipid mediators produces new bioactive compounds and may regulate signal transduction in different cellular processes. Indirectly regulates, for instance, cell cycle G1/S phase transition through its phospholipid phosphatase activity. This chain is Phospholipid phosphatase 2, found in Homo sapiens (Human).